A 427-amino-acid chain; its full sequence is NADPH-dependent stearoyl-CoA 9-desaturase (427 aa).

The Fe cation site is built by His90, His94, His125, His129, His130, His304, His308, and His309.

Belongs to the fatty acid desaturase type 1 family. As to quaternary structure, interacts with the electron transfer protein Rv3230c to form a functional acyl-CoA desaturase complex. Requires Fe(2+) as cofactor. In terms of processing, is rapidly degraded by a mycobacterial protein degradation system that specifically targets the residues LAA at the C-terminus, leading to a post-translational proteolytic regulation of DesA3 essential activity.

It is found in the cell membrane. It catalyses the reaction octadecanoyl-CoA + NADPH + O2 + H(+) = (9Z)-octadecenoyl-CoA + NADP(+) + 2 H2O. Its pathway is lipid metabolism; fatty acid metabolism. Functionally, is likely involved in the aerobic desaturation system responsible for the synthesis of oleic acid from stearoyl-CoA; oleic acid is a precursor of mycobacterial membrane phospholipids and triglycerides. Catalyzes the conversion of stearoyl-CoA to oleoyl-CoA by introduction of a cis double bond between carbons 9 and 10 of the acyl chain. Requires the electron transfer partner Rv3230c to pass two electrons from NADPH to its active site diiron center. Is also able to catalyze the 9-desaturation of palmitoyl-CoA to palmitoleoyl-CoA. The chain is NADPH-dependent stearoyl-CoA 9-desaturase (desA3) from Mycobacterium tuberculosis (strain CDC 1551 / Oshkosh).